A 198-amino-acid polypeptide reads, in one-letter code: C4b-binding protein beta chain (198 aa).

A signal peptide spans 1–17 (MFFWLMCYLVDVWLISA). Residues 22–77 (HCPDPLLVTDEFSSLEPVNVNDTFMFKCNEHCIFKGSNWSQCRENHTRVTHSPVSK) enclose the Sushi 1; atypical; lacks a Cys domain. Asn42, Asn59, and Asn66 each carry an N-linked (GlcNAc...) asparagine glycan. The region spanning 79 to 135 (RDCGPPETPTHGYFEGRDFKSGSTITYYCEARYRLVGTQHQQCIDGEWTSAPPICEL) is the Sushi 2 domain. 2 cysteine pairs are disulfide-bonded: Cys81-Cys121 and Cys107-Cys133.

Disulfide-linked complex of alpha and beta chains.

The protein resides in the secreted. In terms of biological role, controls the classical pathway of complement activation. It binds as a cofactor to C3b/C4b inactivator (C3bINA), which then hydrolyzes the complement fragment C4b. It also accelerates the degradation of the C4bC2a complex (C3 convertase) by dissociating the complement fragment C2a. It also interacts with serum amyloid P component. This chain is C4b-binding protein beta chain (C4BPB), found in Bos taurus (Bovine).